The chain runs to 321 residues: Mas-related G-protein coupled receptor member D (321 aa).

Residues 1-8 lie on the Extracellular side of the membrane; sequence MNSTLDSS. A glycan (N-linked (GlcNAc...) asparagine) is linked at Asn2. A helical membrane pass occupies residues 9-29; that stretch reads PAPGLTISPTMDLVTWIYFSV. Position 30 (Thr30) is a topological domain, cytoplasmic. A helical membrane pass occupies residues 31–51; the sequence is FLAMATCVGGMAGNSLVIWLL. Residues 52 to 72 are Extracellular-facing; that stretch reads SCNGMQRSPFCVYVLNLAVAD. Residues 73 to 93 form a helical membrane-spanning segment; the sequence is FLFLFCMASMLSLETGPLLIV. Over 94 to 146 the chain is Cytoplasmic; that stretch reads NISAKIYEGMRRIKYFAYTAGLSLLTAISTQRCLSVLFPIWYKCHRPRHLSSV. Residues 147–167 form a helical membrane-spanning segment; that stretch reads VSGALWALAFLMNFLASFFCV. The Extracellular segment spans residues 168–181; the sequence is QFWHPNKHQCFKVD. The helical transmembrane segment at 182–202 threads the bilayer; it reads IVFNSLILGIFMPVMILTSTI. Topologically, residues 203–220 are cytoplasmic; sequence LFIRVRKNSLMQRRRPRR. Residues 221 to 241 form a helical membrane-spanning segment; the sequence is LYVVILTSILVFLTCSLPLGI. The Extracellular segment spans residues 242–260; sequence NWFLLYWVDVKRDVRLLYS. The chain crosses the membrane as a helical span at residues 261–281; sequence CVSRFSSSLSSSANPVIYFLV. At 282-321 the chain is on the cytoplasmic side; that stretch reads GSQKSHRLQESLGAVLGRALRDEPEPEGRETPSTCTNDGV. Residues 302–311 are compositionally biased toward basic and acidic residues; it reads RDEPEPEGRE. Residues 302-321 form a disordered region; that stretch reads RDEPEPEGRETPSTCTNDGV. The span at 312-321 shows a compositional bias: polar residues; that stretch reads TPSTCTNDGV.

Belongs to the G-protein coupled receptor 1 family. Mas subfamily. Expressed in a subset of sensory neurons that includes nociceptors. Expressed in the subclass of non-peptidergic sensory neurons that are IB4(+) and VR1(-).

It localises to the cell membrane. Functionally, may regulate nociceptor function and/or development, including the sensation or modulation of pain. Functions as a specific membrane receptor for beta-alanine. The receptor couples with G-protein G(q) and G(i). The chain is Mas-related G-protein coupled receptor member D (Mrgprd) from Mus musculus (Mouse).